Consider the following 439-residue polypeptide: Xylose isomerase (439 aa).

Active-site residues include His101 and Asp104. Residues Glu232, Glu268, His271, Asp296, Asp307, Asp309, and Asp339 each coordinate Mg(2+).

This sequence belongs to the xylose isomerase family. Homotetramer. It depends on Mg(2+) as a cofactor.

The protein resides in the cytoplasm. It catalyses the reaction alpha-D-xylose = alpha-D-xylulofuranose. The polypeptide is Xylose isomerase (Photorhabdus laumondii subsp. laumondii (strain DSM 15139 / CIP 105565 / TT01) (Photorhabdus luminescens subsp. laumondii)).